Reading from the N-terminus, the 257-residue chain is UPF0246 protein CLH_2088 (257 aa).

The protein belongs to the UPF0246 family.

The chain is UPF0246 protein CLH_2088 from Clostridium botulinum (strain Alaska E43 / Type E3).